The following is a 379-amino-acid chain: Carbamoyl phosphate synthase small chain (379 aa).

Positions 1 to 189 (MSKLALLVLE…GLPEAKDDSE (189 aa)) are CPSase. L-glutamine-binding residues include serine 47, glycine 241, and glycine 243. Residues 193-379 (HVVAYDFGAK…FIELIKKHSA (187 aa)) form the Glutamine amidotransferase type-1 domain. Cysteine 269 acts as the Nucleophile in catalysis. L-glutamine contacts are provided by leucine 270, glutamine 273, asparagine 311, glycine 313, and phenylalanine 314. Residues histidine 353 and glutamate 355 contribute to the active site.

The protein belongs to the CarA family. In terms of assembly, composed of two chains; the small (or glutamine) chain promotes the hydrolysis of glutamine to ammonia, which is used by the large (or ammonia) chain to synthesize carbamoyl phosphate. Tetramer of heterodimers (alpha,beta)4.

It catalyses the reaction hydrogencarbonate + L-glutamine + 2 ATP + H2O = carbamoyl phosphate + L-glutamate + 2 ADP + phosphate + 2 H(+). The catalysed reaction is L-glutamine + H2O = L-glutamate + NH4(+). It functions in the pathway amino-acid biosynthesis; L-arginine biosynthesis; carbamoyl phosphate from bicarbonate: step 1/1. Its pathway is pyrimidine metabolism; UMP biosynthesis via de novo pathway; (S)-dihydroorotate from bicarbonate: step 1/3. In terms of biological role, small subunit of the glutamine-dependent carbamoyl phosphate synthetase (CPSase). CPSase catalyzes the formation of carbamoyl phosphate from the ammonia moiety of glutamine, carbonate, and phosphate donated by ATP, constituting the first step of 2 biosynthetic pathways, one leading to arginine and/or urea and the other to pyrimidine nucleotides. The small subunit (glutamine amidotransferase) binds and cleaves glutamine to supply the large subunit with the substrate ammonia. This chain is Carbamoyl phosphate synthase small chain, found in Vibrio parahaemolyticus serotype O3:K6 (strain RIMD 2210633).